Here is a 260-residue protein sequence, read N- to C-terminus: LIM and SH3 domain protein 1 (260 aa).

Met1 carries the post-translational modification N-acetylmethionine. An LIM zinc-binding domain is found at 5–56; it reads CARCCKIVYPTEKVNCLDKFWHKACFHCETCKMTLNMKNYKGYEKKPYCNAH. An N6-acetyllysine modification is found at Lys42. 2 Nebulin repeats span residues 61–95 and 97–131; these read SFTM…KNKG and GFSV…KSRM. The residue at position 68 (Thr68) is a Phosphothreonine. Lys75 bears the N6-methyllysine mark. Ser99 is subject to Phosphoserine. Position 104 is a phosphothreonine (Thr104). The residue at position 112 (Lys112) is an N6-succinyllysine. Residues Ser118 and Ser134 each carry the phosphoserine modification. Positions 123-204 are disordered; it reads HEEFEKSRMG…QRSAPGGGGK (82 aa). Basic and acidic residues predominate over residues 140–155; sequence ECERRDPQESSYRRPQ. Over residues 171–180 the composition is skewed to low complexity; sequence QQPQQQPAAQ. The SH3 domain occupies 201–260; that stretch reads GGGKRYRAVYDYSAADEDEVSFQDGDTIVNVQQIDDGWMYGTVERTGDTGMLPANYVEAI.

Interacts with F-actin. Interacts with ANKRD54. Interacts with KBTBD10. Phosphorylated.

It localises to the cytoplasm. Its subcellular location is the cell cortex. The protein localises to the cytoskeleton. Functionally, plays an important role in the regulation of dynamic actin-based, cytoskeletal activities. Agonist-dependent changes in LASP1 phosphorylation may also serve to regulate actin-associated ion transport activities, not only in the parietal cell but also in certain other F-actin-rich secretory epithelial cell types. The sequence is that of LIM and SH3 domain protein 1 (LASP1) from Bos taurus (Bovine).